The sequence spans 888 residues: Phosphoenolpyruvate carboxylase (888 aa).

Active-site residues include His144 and Lys553.

It belongs to the PEPCase type 1 family. Mg(2+) is required as a cofactor.

The catalysed reaction is oxaloacetate + phosphate = phosphoenolpyruvate + hydrogencarbonate. In terms of biological role, forms oxaloacetate, a four-carbon dicarboxylic acid source for the tricarboxylic acid cycle. The sequence is that of Phosphoenolpyruvate carboxylase from Alcanivorax borkumensis (strain ATCC 700651 / DSM 11573 / NCIMB 13689 / SK2).